The primary structure comprises 67 residues: Bowman-Birk type proteinase inhibitor A4 (67 aa).

Cystine bridges form between cysteine 10/cysteine 29, cysteine 16/cysteine 27, cysteine 36/cysteine 43, and cysteine 40/cysteine 57.

Belongs to the Bowman-Birk serine protease inhibitor family. In terms of tissue distribution, expressed in bulb (at protein level).

In terms of biological role, serine protease inhibitor. Inhibits trypsin (Ki=12nM) and weakly inhibits chymotrypsin with (Ki=460nm). Does not inhibit bacterial subtilisin. The polypeptide is Bowman-Birk type proteinase inhibitor A4 (Hyacinthus orientalis (Common hyacinth)).